Here is a 342-residue protein sequence, read N- to C-terminus: D-erythrose-4-phosphate dehydrogenase (342 aa).

Position 12–13 (12–13 (RI)) interacts with NAD(+). Substrate-binding positions include 154-156 (SCT), R200, 213-214 (TK), and R236. The active-site Nucleophile is the C155. N318 contacts NAD(+).

The protein belongs to the glyceraldehyde-3-phosphate dehydrogenase family. Epd subfamily. Homotetramer.

It localises to the cytoplasm. It carries out the reaction D-erythrose 4-phosphate + NAD(+) + H2O = 4-phospho-D-erythronate + NADH + 2 H(+). Its pathway is cofactor biosynthesis; pyridoxine 5'-phosphate biosynthesis; pyridoxine 5'-phosphate from D-erythrose 4-phosphate: step 1/5. Functionally, catalyzes the NAD-dependent conversion of D-erythrose 4-phosphate to 4-phosphoerythronate. The polypeptide is D-erythrose-4-phosphate dehydrogenase (Klebsiella pneumoniae subsp. pneumoniae (strain ATCC 700721 / MGH 78578)).